The sequence spans 685 residues: T-box transcription factor TBX2 (685 aa).

Residues 104 to 277 (LWDQFHKLGT…NNPFAKGFRD (174 aa)) constitute a DNA-binding region (T-box). Disordered stretches follow at residues 270–433 (PFAK…CGSL) and 606–660 (NLLT…SINE). Composition is skewed to basic and acidic residues over residues 296-308 (MYEE…RDGA), 340-361 (SNRE…EVRT), 378-403 (RLED…KDGG), and 410-428 (SLEK…KSDP). A compositionally biased stretch (polar residues) spans 606–617 (NLLTTGLSASLN). The segment covering 618 to 633 (PGSESSKPGSSRESSP) has biased composition (low complexity). Positions 652-676 (ASMKDSINELQNIQRLVSGLESQRE) form a coiled coil.

In terms of assembly, binds DNA as a monomer.

It localises to the nucleus. Its function is as follows. Transcription factor which acts as a transcriptional repressor. May also function as a transcriptional activator. Binds to the palindromic T site 5'-TTCACACCTAGGTGTGAA-3' DNA sequence, or a half-site, which are present in the regulatory region of several genes. The sequence is that of T-box transcription factor TBX2 (tbx2) from Xenopus tropicalis (Western clawed frog).